The following is a 73-amino-acid chain: Large ribosomal subunit protein bL31 (73 aa).

Belongs to the bacterial ribosomal protein bL31 family. Type A subfamily. Part of the 50S ribosomal subunit.

Its function is as follows. Binds the 23S rRNA. This chain is Large ribosomal subunit protein bL31, found in Cereibacter sphaeroides (strain ATCC 17029 / ATH 2.4.9) (Rhodobacter sphaeroides).